We begin with the raw amino-acid sequence, 107 residues long: Guanylate cyclase activator 2B (107 aa).

The signal sequence occupies residues 1–21 (MSGSQLWAAVVVLLLLQSAQG). Positions 22–92 (VYIKYHGFQV…STFKALRTIA (71 aa)) are excised as a propeptide. 3 disulfide bridges follow: Cys63/Cys76, Cys96/Cys104, and Cys99/Cys107.

This sequence belongs to the guanylin family.

The protein resides in the secreted. In terms of biological role, endogenous activator of intestinal guanylate cyclase. It stimulates this enzyme through the same receptor binding region as the heat-stable enterotoxins. May be a potent physiological regulator of intestinal fluid and electrolyte transport. May be an autocrine/paracrine regulator of intestinal salt and water transport. This is Guanylate cyclase activator 2B (GUCA2B) from Notomys alexis (Spinifex hopping mouse).